We begin with the raw amino-acid sequence, 44 residues long: Photosystem I reaction center subunit IX (44 aa).

A helical transmembrane segment spans residues 7 to 27 (YLSTAPVLAILCVSFLAALLI).

It belongs to the PsaJ family.

It localises to the plastid. The protein resides in the chloroplast thylakoid membrane. Its function is as follows. May help in the organization of the PsaE and PsaF subunits. In Pinus thunbergii (Japanese black pine), this protein is Photosystem I reaction center subunit IX.